A 210-amino-acid polypeptide reads, in one-letter code: Protein GrpE (210 aa).

This sequence belongs to the GrpE family. As to quaternary structure, homodimer.

It is found in the cytoplasm. In terms of biological role, participates actively in the response to hyperosmotic and heat shock by preventing the aggregation of stress-denatured proteins, in association with DnaK and GrpE. It is the nucleotide exchange factor for DnaK and may function as a thermosensor. Unfolded proteins bind initially to DnaJ; upon interaction with the DnaJ-bound protein, DnaK hydrolyzes its bound ATP, resulting in the formation of a stable complex. GrpE releases ADP from DnaK; ATP binding to DnaK triggers the release of the substrate protein, thus completing the reaction cycle. Several rounds of ATP-dependent interactions between DnaJ, DnaK and GrpE are required for fully efficient folding. This is Protein GrpE from Rhizobium leguminosarum bv. trifolii (strain WSM2304).